A 370-amino-acid polypeptide reads, in one-letter code: Forkhead box protein J1.2 (370 aa).

The disordered stretch occupies residues 45–74 (ANSRPPVPRVSQGPCSPPAGDTASCQAPRT). The fork-head DNA-binding region spans 108-202 (KPPYSYATLI…VNGVLKRRRM (95 aa)). Residues 227-246 (PGSHHMQHISGGHRQSRRYE) are disordered.

The protein belongs to the FOXJ1 family.

The protein localises to the nucleus. Its function is as follows. Key transcription factor required for motile ciliogenesis. Activates genes essential for motile cilia formation and function. The polypeptide is Forkhead box protein J1.2 (Xenopus laevis (African clawed frog)).